Here is a 190-residue protein sequence, read N- to C-terminus: Endo-1,4-beta-xylanase (190 aa).

In terms of domain architecture, GH11 spans 1-190 (QTIGPGTGYS…SSGSASITVS (190 aa)). The Nucleophile role is filled by Glu-86. The active-site Proton donor is Glu-177.

It belongs to the glycosyl hydrolase 11 (cellulase G) family.

The enzyme catalyses Endohydrolysis of (1-&gt;4)-beta-D-xylosidic linkages in xylans.. It functions in the pathway glycan degradation; xylan degradation. This is Endo-1,4-beta-xylanase from Trichoderma harzianum (Hypocrea lixii).